Reading from the N-terminus, the 353-residue chain is Photosystem II protein D1 (353 aa).

Threonine 2 is subject to N-acetylthreonine. Position 2 is a phosphothreonine (threonine 2). The next 3 helical transmembrane spans lie at 29-46 (YIGW…TATS), 118-133 (HFLL…EWEL), and 142-156 (WIAV…AATA). Residue histidine 118 participates in chlorophyll a binding. Position 126 (tyrosine 126) interacts with pheophytin a. The [CaMn4O5] cluster site is built by aspartate 170 and glutamate 189. The helical transmembrane segment at 197–218 (FHMLGVAGVFGGSLFSAMHGSL) threads the bilayer. Histidine 198 contacts chlorophyll a. A quinone is bound by residues histidine 215 and 264–265 (SF). Histidine 215 provides a ligand contact to Fe cation. Histidine 272 contacts Fe cation. The helical transmembrane segment at 274-288 (FLAAWPVVGIWFTAL) threads the bilayer. 4 residues coordinate [CaMn4O5] cluster: histidine 332, glutamate 333, aspartate 342, and alanine 344. Positions 345-353 (SIEAPLVNG) are excised as a propeptide.

Belongs to the reaction center PufL/M/PsbA/D family. PSII is composed of 1 copy each of membrane proteins PsbA, PsbB, PsbC, PsbD, PsbE, PsbF, PsbH, PsbI, PsbJ, PsbK, PsbL, PsbM, PsbT, PsbX, PsbY, PsbZ, Psb30/Ycf12, at least 3 peripheral proteins of the oxygen-evolving complex and a large number of cofactors. It forms dimeric complexes. The D1/D2 heterodimer binds P680, chlorophylls that are the primary electron donor of PSII, and subsequent electron acceptors. It shares a non-heme iron and each subunit binds pheophytin, quinone, additional chlorophylls, carotenoids and lipids. D1 provides most of the ligands for the Mn4-Ca-O5 cluster of the oxygen-evolving complex (OEC). There is also a Cl(-1) ion associated with D1 and D2, which is required for oxygen evolution. The PSII complex binds additional chlorophylls, carotenoids and specific lipids. serves as cofactor. Post-translationally, tyr-161 forms a radical intermediate that is referred to as redox-active TyrZ, YZ or Y-Z. In terms of processing, C-terminally processed by CTPA; processing is essential to allow assembly of the oxygen-evolving complex and thus photosynthetic growth.

The protein localises to the plastid. It localises to the chloroplast thylakoid membrane. The enzyme catalyses 2 a plastoquinone + 4 hnu + 2 H2O = 2 a plastoquinol + O2. Functionally, photosystem II (PSII) is a light-driven water:plastoquinone oxidoreductase that uses light energy to abstract electrons from H(2)O, generating O(2) and a proton gradient subsequently used for ATP formation. It consists of a core antenna complex that captures photons, and an electron transfer chain that converts photonic excitation into a charge separation. The D1/D2 (PsbA/PsbD) reaction center heterodimer binds P680, the primary electron donor of PSII as well as several subsequent electron acceptors. This Psilotum nudum (Whisk fern) protein is Photosystem II protein D1.